Consider the following 245-residue polypeptide: Orotidine 5'-phosphate decarboxylase (245 aa).

Substrate contacts are provided by residues Asp22, Lys44, 71-80 (DLKFHDIPNT), Thr131, Arg192, Gln201, Gly221, and Arg222. Lys73 acts as the Proton donor in catalysis.

Belongs to the OMP decarboxylase family. Type 1 subfamily. Homodimer.

The enzyme catalyses orotidine 5'-phosphate + H(+) = UMP + CO2. Its pathway is pyrimidine metabolism; UMP biosynthesis via de novo pathway; UMP from orotate: step 2/2. Functionally, catalyzes the decarboxylation of orotidine 5'-monophosphate (OMP) to uridine 5'-monophosphate (UMP). This is Orotidine 5'-phosphate decarboxylase from Shigella dysenteriae serotype 1 (strain Sd197).